Reading from the N-terminus, the 146-residue chain is ATP synthase epsilon chain (146 aa).

The interval 103–124 (QAERELGQLPEEEDEDSRRARE) is disordered.

The protein belongs to the ATPase epsilon chain family. F-type ATPases have 2 components, CF(1) - the catalytic core - and CF(0) - the membrane proton channel. CF(1) has five subunits: alpha(3), beta(3), gamma(1), delta(1), epsilon(1). CF(0) has three main subunits: a, b and c.

It is found in the cell membrane. Functionally, produces ATP from ADP in the presence of a proton gradient across the membrane. The polypeptide is ATP synthase epsilon chain (Rubrobacter xylanophilus (strain DSM 9941 / JCM 11954 / NBRC 16129 / PRD-1)).